Consider the following 561-residue polypeptide: Mercuric reductase (561 aa).

One can recognise an HMA domain in the interval 2-65; the sequence is THLKITGMTC…AVAGLGYKAT (64 aa). The a metal cation site is built by Cys-11 and Cys-14. FAD-binding residues include Ala-110, Gly-130, and Thr-135. Cys-136 and Cys-141 form a disulfide bridge. FAD is bound by residues Lys-145, Ala-211, Asp-403, and Val-411. Hg(2+) is bound by residues Cys-558 and Cys-559.

This sequence belongs to the class-I pyridine nucleotide-disulfide oxidoreductase family. Homodimer. FAD is required as a cofactor.

The catalysed reaction is Hg + NADP(+) + H(+) = Hg(2+) + NADPH. In terms of biological role, resistance to Hg(2+) in bacteria appears to be governed by a specialized system which includes mercuric reductase. MerA protein is responsible for volatilizing mercury as Hg(0). Plays a pivotal role in mercury resistance under thiol-depleted conditions and cell protection. Protects cells under thiol-depleted conditions. The protein is Mercuric reductase (merA) of Pseudomonas aeruginosa.